The sequence spans 152 residues: Photosystem II extrinsic protein U, chloroplastic (152 aa).

Residues 1-35 (MDSTAFVGAAAPLRVAAAARSTICMAAADDKPVVS) constitute a chloroplast transit peptide. A thylakoid-targeting transit peptide spans 36–59 (RRAALTGAAAAALAAVAGSLPALA).

Belongs to the PsbU family. In terms of assembly, PSII is composed of 1 copy each of membrane proteins PsbA, PsbB, PsbC, PsbD, PsbE, PsbF, PsbH, PsbI, PsbJ, PsbK, PsbL, PsbM, PsbT, PsbX, PsbY, PsbZ, Psb30/Ycf12, at least 3 peripheral proteins of the oxygen-evolving complex and a large number of cofactors. It forms dimeric complexes. The oxygen-evolving complex in red algae is composed of PsbO (OEC33), PsbQ', cytochrome c-550 and PsbU. Post-translationally, predicted to be translocated into the thylakoid lumen by the Tat system.

The protein localises to the plastid. Its subcellular location is the chloroplast thylakoid membrane. Functionally, one of the extrinsic, lumenal subunits of photosystem II (PSII). PSII is a light-driven water plastoquinone oxidoreductase, using light energy to abstract electrons from H(2)O, generating a proton gradient subsequently used for ATP formation. The extrinsic proteins stabilize the structure of photosystem II oxygen-evolving complex (OEC), the ion environment of oxygen evolution and protect the OEC against heat-induced inactivation. The chain is Photosystem II extrinsic protein U, chloroplastic from Pyropia yezoensis (Susabi-nori).